Here is a 116-residue protein sequence, read N- to C-terminus: Large ribosomal subunit protein bL17 (116 aa).

This sequence belongs to the bacterial ribosomal protein bL17 family. As to quaternary structure, part of the 50S ribosomal subunit. Contacts protein L32.

This chain is Large ribosomal subunit protein bL17, found in Thermosynechococcus vestitus (strain NIES-2133 / IAM M-273 / BP-1).